A 677-amino-acid chain; its full sequence is MERVHLTAWLALFLIVVANATPTPARTPTGCPADCTCSLSQHTHKPLYHLKCNSTRGLRLTEKTFQSTVPVHSIDLSHLNLTRLSHLLDKLPELTSADLSHNQLKDLGHLGKGLKRLNLKHNQLTSDKLRKLPQHLQVLNLQHNNITHLPLELTHMHQLHQLELSHNAINCSCQTLEVRNWLVERIVYMEHPVVCSYPLEFRGRSWLQLKQDEICKKEKYQWFDTEENELMMGDQPAAVSAEREDEEELGKDFLPIVGNPAATAKKVRSPQIPLPSDQVEGSGDLSETNMELKLPEETVAEPEAAESQLVDAAASPSVLEEHIVKDEDEDDEGSGSGGGLLIIPDPSKVKITSEDDIDSDGKPEESDVRPLENPENSENPDTVFSNKIGIYEGDQEEKKPVEEDNIVPVVMTNLDTGLESDVVTDGPLDSSKESEDILTAKIGKPKDDSSAIYYLLAVIGLIVVGLVLFVAIKRCKYDSNAAARDAEAQRQTELLDMDKKQLGKPLHKNGHGNGQEHSPLIGEKTKLDEAQIVKKPYENGEAKDGAGQQPLLNGNGSANGGTKEAPETGEPAAHEYYPITPRYPTPQSPRASKYAQQQQLAEQNNNEPDGAYLPSSPKSGRYSPVYSPETGRVKIKLTETPKPKTPMLVTRSKSNAGDIITTPVRPIEPTHQVINGH.

The N-terminal stretch at 1–20 (MERVHLTAWLALFLIVVANA) is a signal peptide. At 21 to 451 (TPTPARTPTG…IGKPKDDSSA (431 aa)) the chain is on the extracellular side. N-linked (GlcNAc...) asparagine glycans are attached at residues Asn-53 and Asn-80. 4 LRR repeats span residues 91–116 (LPEL…GLKR), 118–133 (NLKH…RKLP), 134–156 (QHLQ…LTHM), and 158–183 (QLHQ…NWLV). Asn-145 and Asn-170 each carry an N-linked (GlcNAc...) asparagine glycan. Residues 184 to 216 (ERIVYMEHPVVCSYPLEFRGRSWLQLKQDEICK) enclose the LRRCT domain. Disordered stretches follow at residues 264 to 285 (AKKV…SGDL), 298 to 317 (TVAE…ASPS), and 325 to 385 (KDED…TVFS). Residues 347-372 (SKVKITSEDDIDSDGKPEESDVRPLE) are compositionally biased toward basic and acidic residues. Polar residues predominate over residues 374–385 (PENSENPDTVFS). The helical transmembrane segment at 452 to 472 (IYYLLAVIGLIVVGLVLFVAI) threads the bilayer. At 473–677 (KRCKYDSNAA…EPTHQVINGH (205 aa)) the chain is on the cytoplasmic side. Disordered regions lie at residues 502–523 (LGKP…LIGE) and 539–677 (NGEA…INGH). Over residues 595–607 (AQQQQLAEQNNNE) the composition is skewed to low complexity.

As to quaternary structure, interacts with dome; the interaction promotes internalization of dome and its subsequent lysosomal degradation. As to expression, in adult intestine, expressed in both small progenitor cells and large nuclei enterocytes (at protein level). During embryogenesis, restricted to the developing trachea.

The protein localises to the cell membrane. Plays a role in negative regulation of the JAK/STAT pathway by binding to the receptor dome and promoting its internalization for subsequent lysosomal degradation, thereby reducing JAK/STAT signaling. The sequence is that of Protein windpipe from Drosophila melanogaster (Fruit fly).